The primary structure comprises 317 residues: Melanocyte-stimulating hormone receptor (317 aa).

A compositionally biased stretch (polar residues) spans 1–20 (MPVQGSQRSLLGAVNSTPTA). The interval 1-23 (MPVQGSQRSLLGAVNSTPTATPH) is disordered. At 1-37 (MPVQGSQRSLLGAVNSTPTATPHLRPAANQTGPQCLE) the chain is on the extracellular side. N-linked (GlcNAc...) asparagine glycosylation is present at N29. Residues 38-63 (VSIPDGLFLCLGLVSLVENTLVVAAI) form a helical membrane-spanning segment. Residues 64–72 (AKNRNLHSP) are Cytoplasmic-facing. Residues 73–93 (MYCFICCLALSDLLVSVSSVL) form a helical membrane-spanning segment. Topologically, residues 94–118 (ETAVLLLLGAGALAAQATVVQQLGN) are extracellular. A helical membrane pass occupies residues 119–140 (VIDVLLCSSMVSSLFFLGAIAM). Residues 141-163 (DRYISIFYALRYHSIVTLARARR) lie on the Cytoplasmic side of the membrane. Residues 164–183 (AIAAIWAASILSSTLFIAYC) form a helical membrane-spanning segment. Over 184–191 (DRTAALLC) the chain is Extracellular. Residues 192 to 211 (LVVFFLAMLVLMAVLYVHML) traverse the membrane as a helical segment. Residues 212–240 (TQARQHAQGIARLHKRQRPVQQGWGLKGA) are Cytoplasmic-facing. Residues 241 to 266 (ATLTILLGVFFLCWGPFFLHLTLIAV) traverse the membrane as a helical segment. Topologically, residues 267–279 (CPQHPTCSCIFKN) are extracellular. The helical transmembrane segment at 280-300 (FRLFLALIVCNAIVDPLIYAF) threads the bilayer. Residues 301–317 (RSQELRKTLKEVLLFFW) lie on the Cytoplasmic side of the membrane.

It belongs to the G-protein coupled receptor 1 family. In terms of assembly, interacts with MGRN1, but does not undergo MGRN1-mediated ubiquitination; this interaction competes with GNAS-binding and thus inhibits agonist-induced cAMP production. Interacts with OPN3; the interaction results in a decrease in MC1R-mediated cAMP signaling and ultimately a decrease in melanin production in melanocytes.

Its subcellular location is the cell membrane. Its function is as follows. Receptor for MSH (alpha, beta and gamma) and ACTH. The activity of this receptor is mediated by G proteins which activate adenylate cyclase. Mediates melanogenesis, the production of eumelanin (black/brown) and phaeomelanin (red/yellow), via regulation of cAMP signaling in melanocytes. This is Melanocyte-stimulating hormone receptor (MC1R) from Lemur catta (Ring-tailed lemur).